Here is a 237-residue protein sequence, read N- to C-terminus: MKVLAPLILAGAASAHTIFSSLEVGGVNQGIGQGVRVPSYNGPIEDVTSNSIACNGPPNPTTPTNKVITVRAGETVTAVWRYMLSTTGSAPNDIMDSSHKGPTMAYLKKVDNATTDSGVGGGWFKIQEDGLTNGVWGTERVINGQGRHNIKIPECIAPGQYLLRAEMLALHGASNYPGAQFYMECAQLNIVGGTGSKTPSTVSFPGAYKGTDPGVKINIYWPPVTSYQIPGPGVFTC.

The N-terminal stretch at 1–15 (MKVLAPLILAGAASA) is a signal peptide. Cu(2+) contacts are provided by H16 and H99. 2 disulfides stabilise this stretch: C54/C185 and C155/C237. A glycan (N-linked (GlcNAc...) asparagine) is linked at N112. O2 contacts are provided by H171 and Q180. A Cu(2+)-binding site is contributed by Y182.

Belongs to the polysaccharide monooxygenase AA9 family. It depends on Cu(2+) as a cofactor.

The protein resides in the secreted. It carries out the reaction [(1-&gt;4)-beta-D-glucosyl]n+m + reduced acceptor + O2 = 4-dehydro-beta-D-glucosyl-[(1-&gt;4)-beta-D-glucosyl]n-1 + [(1-&gt;4)-beta-D-glucosyl]m + acceptor + H2O.. With respect to regulation, is able to utilize various natural phenolic compounds as reducing agents. Most of these reducing agents are present in plants, either free or as lignin building blocks, such as sinapic acid, or as flavonoids such as catechin and dopamine. Phenolic compounds with 1,2-benzenediol and 1,2,3-benzenetriol moieties yield the highest release of oxidized and non-oxidized glucooligosaccharides from cellulose compared to monophenols or sulfur-containing compounds. In terms of biological role, lytic polysaccharide monooxygenase (LPMO) that depolymerizes crystalline and amorphous polysaccharides via the oxidation of scissile alpha- or beta-(1-4)-glycosidic bonds, yielding C4 oxidation products. Catalysis by LPMOs requires the reduction of the active-site copper from Cu(II) to Cu(I) by a reducing agent and H(2)O(2) or O(2) as a cosubstrate. Shows oxidative cleavage of beta-(1-3, 1-4)-glucan from oat spelt or xyloglucan from tamarind seed, in addition to cellulose. This chain is AA9 family lytic polysaccharide monooxygenase C, found in Thermothelomyces thermophilus (strain ATCC 42464 / BCRC 31852 / DSM 1799) (Sporotrichum thermophile).